The chain runs to 554 residues: Tetratricopeptide repeat protein 34 (554 aa).

TPR repeat units lie at residues 38–71, 166–199, 200–233, 294–327, 328–361, 411–445, 452–485, and 500–533; these read ETSC…RPQA, SESL…EPGN, VKAL…DPGT, PSWR…TPSS, EAAQ…DTQD, NPYH…PAED, SEDF…APAQ, and ASVF…DPSH.

This chain is Tetratricopeptide repeat protein 34 (Ttc34), found in Mus musculus (Mouse).